The primary structure comprises 384 residues: Guanine nucleotide-binding protein alpha-1 subunit (384 aa).

Residues 1 to 22 (MGSLCSRNKHYSQADDEENTQT) are disordered. Residue Gly2 is the site of N-myristoyl glycine attachment. Cys5 carries S-palmitoyl cysteine lipidation. The 347-residue stretch at 38–384 (HIQKLLLLGA…RRNLFEAGLL (347 aa)) folds into the G-alpha domain. Residues 41-54 (KLLLLGAGDSGKST) form a G1 motif region. Asp49, Ser50, Gly51, Lys52, Ser53, Thr54, Asp163, Leu188, Thr194, Gly222, Asn288, Lys289, Asp291, and Ala356 together coordinate GTP. Residue Ser53 participates in Mg(2+) binding. The interval 186 to 194 (DVLFARIRT) is G2 motif. Thr194 lines the Mg(2+) pocket. The G3 motif stretch occupies residues 215 to 224 (YRLFDVGGQR). Positions 284–291 (MLFLNKFD) are G4 motif. A G5 motif region spans residues 354-359 (TTALDQ).

It belongs to the G-alpha family. G proteins are composed of 3 units; alpha, beta and gamma. The alpha chain contains the guanine nucleotide binding site. Mg(2+) serves as cofactor.

Functionally, guanine nucleotide-binding proteins (G proteins) are involved as modulators or transducers in various transmembrane signaling systems. This chain is Guanine nucleotide-binding protein alpha-1 subunit (GPA1), found in Solanum tuberosum (Potato).